The primary structure comprises 173 residues: CDP-archaeol synthase (173 aa).

Helical transmembrane passes span 15-35 (GLWF…FGGG), 59-79 (GFIV…LVVG), 84-104 (AGDG…GSFV), 118-138 (VLDQ…VYGW), and 142-162 (GWVL…TNVI).

Belongs to the CDP-archaeol synthase family. The cofactor is Mg(2+).

The protein resides in the cell membrane. It catalyses the reaction 2,3-bis-O-(geranylgeranyl)-sn-glycerol 1-phosphate + CTP + H(+) = CDP-2,3-bis-O-(geranylgeranyl)-sn-glycerol + diphosphate. It participates in membrane lipid metabolism; glycerophospholipid metabolism. Its function is as follows. Catalyzes the formation of CDP-2,3-bis-(O-geranylgeranyl)-sn-glycerol (CDP-archaeol) from 2,3-bis-(O-geranylgeranyl)-sn-glycerol 1-phosphate (DGGGP) and CTP. This reaction is the third ether-bond-formation step in the biosynthesis of archaeal membrane lipids. In Methanopyrus kandleri (strain AV19 / DSM 6324 / JCM 9639 / NBRC 100938), this protein is CDP-archaeol synthase.